The following is a 160-amino-acid chain: Cytochrome b6-f complex subunit 4 (160 aa).

The next 3 membrane-spanning stretches (helical) occupy residues 36–56, 95–115, and 131–151; these read LLYI…GLAV, LLGV…PFLE, and TVFL…ALPI.

Belongs to the cytochrome b family. PetD subfamily. In terms of assembly, the 4 large subunits of the cytochrome b6-f complex are cytochrome b6, subunit IV (17 kDa polypeptide, petD), cytochrome f and the Rieske protein, while the 4 small subunits are petG, petL, petM and petN. The complex functions as a dimer.

It is found in the plastid. Its subcellular location is the chloroplast thylakoid membrane. Component of the cytochrome b6-f complex, which mediates electron transfer between photosystem II (PSII) and photosystem I (PSI), cyclic electron flow around PSI, and state transitions. This chain is Cytochrome b6-f complex subunit 4, found in Marchantia polymorpha (Common liverwort).